The sequence spans 113 residues: Hydrogenase maturation factor HypA (113 aa).

Histidine 2 contacts Ni(2+). Zn(2+)-binding residues include cysteine 73, cysteine 76, cysteine 89, and cysteine 92.

It belongs to the HypA/HybF family.

Involved in the maturation of [NiFe] hydrogenases. Required for nickel insertion into the metal center of the hydrogenase. The protein is Hydrogenase maturation factor HypA of Paracoccus denitrificans (strain Pd 1222).